We begin with the raw amino-acid sequence, 2723 residues long: Zinc finger protein 292 (2723 aa).

The C2H2-type 1 zinc finger occupies 569-591 (YSCPICAKNFNSKETFVPHVTLH). The segment at 608–633 (RLGRPPKITTTNENQKTNTVAKQEQR) is disordered. A compositionally biased stretch (polar residues) spans 615 to 629 (ITTTNENQKTNTVAK). At Ser-654 the chain carries Phosphoserine. 5 C2H2-type zinc fingers span residues 681–705 (FNCP…VKGH), 722–744 (VICQ…LQMH), 750–774 (YICI…RKEH), 779–803 (AKCM…EAQH), and 807–831 (YTCK…LDDH). The span at 825-834 (EKHLDDHSTP) shows a compositional bias: basic and acidic residues. The interval 825 to 860 (EKHLDDHSTPPEKVLPPEAQLNSSGDSIQPSEVNQN) is disordered. Residues 844 to 860 (QLNSSGDSIQPSEVNQN) show a composition bias toward polar residues. The C2H2-type 7 zinc-finger motif lies at 1098 to 1123 (FSCQVEGCTRTYNSSQSIGKHMKTAH). Lys-1117 bears the N6-acetyllysine mark. Ser-1159 is modified (phosphoserine). The interval 1331-1364 (SSTNAQQSAPEKVKKDRGRGPNGKERKPKHNKRA) is disordered. A compositionally biased stretch (basic and acidic residues) spans 1341 to 1355 (EKVKKDRGRGPNGKE). The C2H2-type 8; degenerate zinc-finger motif lies at 1375–1397 (FICSRCYRAFTNPRSLGGHLSKR). Positions 1588–1627 (SFPNSGGPSQNFTSNSSRVSVISGPQNTRSSHLNKKGNSA) are enriched in polar residues. The interval 1588-1634 (SFPNSGGPSQNFTSNSSRVSVISGPQNTRSSHLNKKGNSASKRRKKV) is disordered. A coiled-coil region spans residues 1827 to 1854 (QSEVSHKEDQIQEILEGLQKLKLENDLS). 2 C2H2-type zinc fingers span residues 1902–1927 (FVCQ…GKIH) and 1947–1972 (FKCV…QLVH). Residues 1986–2023 (RPYGRKSQSENVPASRSTQVKKQLAMTEENKKESQPAL) form a disordered region. Residues 1994–2006 (SENVPASRSTQVK) are compositionally biased toward polar residues. At Lys-2042 the chain carries N6-acetyllysine. The tract at residues 2074-2103 (NTQTKGRKIRRHKKEKEEKKRKKPVSQSLE) is disordered. Over residues 2078 to 2097 (KGRKIRRHKKEKEEKKRKKP) the composition is skewed to basic residues. 4 consecutive C2H2-type zinc fingers follow at residues 2114–2139 (YRCV…QAVH), 2172–2197 (FRCQ…MKLH), 2216–2241 (FPCD…EADH), and 2256–2281 (YKCD…FNKH). 2 stretches are compositionally biased toward basic residues: residues 2285-2294 (HKAHLIRPRR) and 2312-2322 (KSKHRGTKHSR). The segment at 2285-2345 (HKAHLIRPRR…KKKNNLENKN (61 aa)) is disordered. The segment at 2386–2410 (YPCMIKGCTSVVTSESNIIRHYKCH) adopts a C2H2-type 15 zinc-finger fold. A compositionally biased stretch (basic and acidic residues) spans 2441-2452 (QEGAKNDVKDSD). Disordered stretches follow at residues 2441–2480 (QEGA…EKDE), 2530–2564 (LKRV…VRKE), and 2606–2631 (QKKN…RKNI). Over residues 2453–2470 (TCVSESNDNSRTTATVSQ) the composition is skewed to polar residues. Positions 2606–2615 (QKKNTDKDHP) are enriched in basic and acidic residues.

This sequence belongs to the krueppel C2H2-type zinc-finger protein family.

It is found in the nucleus. May be involved in transcriptional regulation. The sequence is that of Zinc finger protein 292 (ZNF292) from Homo sapiens (Human).